The following is a 444-amino-acid chain: Phosphoglucosamine mutase (444 aa).

Catalysis depends on Ser103, which acts as the Phosphoserine intermediate. Ser103, Asp242, Asp244, and Asp246 together coordinate Mg(2+). Ser103 is subject to Phosphoserine.

Belongs to the phosphohexose mutase family. Mg(2+) is required as a cofactor. Activated by phosphorylation.

The catalysed reaction is alpha-D-glucosamine 1-phosphate = D-glucosamine 6-phosphate. Catalyzes the conversion of glucosamine-6-phosphate to glucosamine-1-phosphate. This is Phosphoglucosamine mutase from Hydrogenovibrio crunogenus (strain DSM 25203 / XCL-2) (Thiomicrospira crunogena).